We begin with the raw amino-acid sequence, 353 residues long: Putative transport protein aq_740 (353 aa).

A run of 8 helical transmembrane segments spans residues 4-24 (LSLF…LYLL), 28-48 (FNPI…YGFI), 60-80 (FLVI…FAVI), 156-176 (VYTA…LFFI), 209-229 (VLAV…MGFI), 240-260 (LIWA…AAFV), 268-288 (LFTT…TFLI), and 309-329 (VALF…GVFL).

Belongs to the autoinducer-2 exporter (AI-2E) (TC 2.A.86) family.

The protein resides in the cell membrane. The sequence is that of Putative transport protein aq_740 from Aquifex aeolicus (strain VF5).